We begin with the raw amino-acid sequence, 199 residues long: Superoxide dismutase [Mn/Fe] (199 aa).

Fe(3+) is bound by residues histidine 27, histidine 81, aspartate 161, and histidine 165. Residues histidine 27, histidine 81, aspartate 161, and histidine 165 each contribute to the Mn(2+) site.

This sequence belongs to the iron/manganese superoxide dismutase family. In terms of assembly, homodimer. Requires Mn(2+) as cofactor. Fe(3+) is required as a cofactor.

The enzyme catalyses 2 superoxide + 2 H(+) = H2O2 + O2. Functionally, destroys superoxide anion radicals which are normally produced within the cells and which are toxic to biological systems. Catalyzes the dismutation of superoxide anion radicals into O2 and H2O2 by successive reduction and oxidation of the transition metal ion at the active site. This chain is Superoxide dismutase [Mn/Fe] (sodA), found in Staphylococcus haemolyticus (strain JCSC1435).